We begin with the raw amino-acid sequence, 465 residues long: Ribulose bisphosphate carboxylase large chain (465 aa).

K4 carries the post-translational modification N6,N6,N6-trimethyllysine. Residues N113 and T163 each coordinate substrate. Residue K165 is the Proton acceptor of the active site. K167 provides a ligand contact to substrate. Mg(2+) is bound by residues K191, D193, and E194. K191 is subject to N6-carboxylysine. H284 functions as the Proton acceptor in the catalytic mechanism. Substrate is bound by residues R285, H317, and S369.

The protein belongs to the RuBisCO large chain family. Type I subfamily. Heterohexadecamer of 8 large chains and 8 small chains; disulfide-linked. The disulfide link is formed within the large subunit homodimers. Mg(2+) serves as cofactor. The disulfide bond which can form in the large chain dimeric partners within the hexadecamer appears to be associated with oxidative stress and protein turnover.

The protein localises to the plastid. The protein resides in the chloroplast. It carries out the reaction 2 (2R)-3-phosphoglycerate + 2 H(+) = D-ribulose 1,5-bisphosphate + CO2 + H2O. The catalysed reaction is D-ribulose 1,5-bisphosphate + O2 = 2-phosphoglycolate + (2R)-3-phosphoglycerate + 2 H(+). Its function is as follows. RuBisCO catalyzes two reactions: the carboxylation of D-ribulose 1,5-bisphosphate, the primary event in carbon dioxide fixation, as well as the oxidative fragmentation of the pentose substrate in the photorespiration process. Both reactions occur simultaneously and in competition at the same active site. The sequence is that of Ribulose bisphosphate carboxylase large chain from Combretum indicum (Rangoon creeper).